Reading from the N-terminus, the 457-residue chain is D-hydantoinase (457 aa).

The Zn(2+) site is built by His57 and His59. Phosphoserine is present on Ser69. Lys148 provides a ligand contact to Zn(2+). Lys148 bears the N6-carboxylysine mark. Tyr153 contributes to the substrate binding site. Zn(2+)-binding residues include His181 and His237. A substrate-binding site is contributed by Thr286. Asp313 is a binding site for Zn(2+). Substrate is bound at residue Asn335.

The protein belongs to the metallo-dependent hydrolases superfamily. Hydantoinase/dihydropyrimidinase family. In terms of assembly, homodimer and homotetramer. The cofactor is Zn(2+). In terms of processing, carboxylation allows a single lysine to coordinate two zinc ions.

Its function is as follows. Catalyzes the stereospecific hydrolysis of the cyclic amide bond of D-hydantoin derivatives. The sequence is that of D-hydantoinase (hyuA) from Ralstonia pickettii (Burkholderia pickettii).